Consider the following 346-residue polypeptide: Elongation factor Ts (346 aa).

The interval 80 to 83 is involved in Mg(2+) ion dislocation from EF-Tu; that stretch reads TDFV.

It belongs to the EF-Ts family.

It localises to the cytoplasm. Its function is as follows. Associates with the EF-Tu.GDP complex and induces the exchange of GDP to GTP. It remains bound to the aminoacyl-tRNA.EF-Tu.GTP complex up to the GTP hydrolysis stage on the ribosome. This chain is Elongation factor Ts, found in Streptococcus pyogenes serotype M1.